Consider the following 253-residue polypeptide: Geranylgeranylglyceryl phosphate synthase (253 aa).

D23 and S52 together coordinate Mg(2+). Sn-glycerol 1-phosphate-binding positions include 171-177 (YFEAGSG), 202-203 (GG), and 224-225 (GT).

Belongs to the GGGP/HepGP synthase family. Group II subfamily. As to quaternary structure, homodimer. It depends on Mg(2+) as a cofactor.

It is found in the cytoplasm. The enzyme catalyses sn-glycerol 1-phosphate + (2E,6E,10E)-geranylgeranyl diphosphate = sn-3-O-(geranylgeranyl)glycerol 1-phosphate + diphosphate. It participates in membrane lipid metabolism; glycerophospholipid metabolism. With respect to regulation, inhibited by high concentrations of magnesium (&gt;10 mM) and by EDTA in vitro. Its function is as follows. Prenyltransferase that catalyzes the transfer of the geranylgeranyl moiety of geranylgeranyl diphosphate (GGPP) to the C3 hydroxyl of sn-glycerol-1-phosphate (G1P). This reaction is the first ether-bond-formation step in the biosynthesis of archaeal membrane lipids. Cannot use sn-glycerol-3-phosphate (G3P) as substrate. The chain is Geranylgeranylglyceryl phosphate synthase from Thermoplasma acidophilum (strain ATCC 25905 / DSM 1728 / JCM 9062 / NBRC 15155 / AMRC-C165).